The chain runs to 591 residues: Aspartate--tRNA(Asp/Asn) ligase (591 aa).

L-aspartate is bound at residue Glu174. An aspartate region spans residues Gln198–Lys201. L-aspartate is bound at residue Arg220. ATP contacts are provided by residues Arg220–Glu222 and Gln229. His450 contacts L-aspartate. Glu483 lines the ATP pocket. L-aspartate is bound at residue Arg490. Gly535 to Arg538 contributes to the ATP binding site.

The protein belongs to the class-II aminoacyl-tRNA synthetase family. Type 1 subfamily. As to quaternary structure, homodimer.

It is found in the cytoplasm. The enzyme catalyses tRNA(Asx) + L-aspartate + ATP = L-aspartyl-tRNA(Asx) + AMP + diphosphate. Functionally, aspartyl-tRNA synthetase with relaxed tRNA specificity since it is able to aspartylate not only its cognate tRNA(Asp) but also tRNA(Asn). Reaction proceeds in two steps: L-aspartate is first activated by ATP to form Asp-AMP and then transferred to the acceptor end of tRNA(Asp/Asn). The polypeptide is Aspartate--tRNA(Asp/Asn) ligase (Ectopseudomonas mendocina (strain ymp) (Pseudomonas mendocina)).